The following is a 211-amino-acid chain: MVTTKRYTLPPLPYAYNALEPYISAEIMQLHHQKHHQGYVNGANAALEKLEKFRKGEAQIDIRAVLRDLSFHLNGHILHSIFWPNMAPPGKGGGKPGGKIADLINKFFGSFEKFKEEFSQAAKNVEGVGWAILVYEPLEEQLLILQIEKHNLMHAADAQVLLALDVWEHAYYLQYKNDRGSYVDNWWNVVNWDDVERRLQKALNGQIALKL.

Residues H31, H79, D165, and H169 each contribute to the Fe cation site.

The protein belongs to the iron/manganese superoxide dismutase family. Homotetramer. Fe cation is required as a cofactor.

The catalysed reaction is 2 superoxide + 2 H(+) = H2O2 + O2. Functionally, destroys superoxide anion radicals which are normally produced within the cells and which are toxic to biological systems. This Pyrobaculum aerophilum (strain ATCC 51768 / DSM 7523 / JCM 9630 / CIP 104966 / NBRC 100827 / IM2) protein is Superoxide dismutase [Fe] (sod).